The chain runs to 1160 residues: Nck-associated protein 1 homolog (1160 aa).

Belongs to the HEM-1/HEM-2 family. In terms of assembly, part of a Scar/WAVE complex containing brk1, scrA, abiA, pirA and napA.

Involved in regulation of actin and microtubule organization. Involved in cell adhesion. The protein is Nck-associated protein 1 homolog (napA) of Dictyostelium discoideum (Social amoeba).